Consider the following 485-residue polypeptide: Glutamyl-tRNA(Gln) amidotransferase subunit A (485 aa).

Active-site charge relay system residues include Lys75 and Ser150. The active-site Acyl-ester intermediate is the Ser174.

This sequence belongs to the amidase family. GatA subfamily. In terms of assembly, heterotrimer of A, B and C subunits.

The catalysed reaction is L-glutamyl-tRNA(Gln) + L-glutamine + ATP + H2O = L-glutaminyl-tRNA(Gln) + L-glutamate + ADP + phosphate + H(+). Its function is as follows. Allows the formation of correctly charged Gln-tRNA(Gln) through the transamidation of misacylated Glu-tRNA(Gln) in organisms which lack glutaminyl-tRNA synthetase. The reaction takes place in the presence of glutamine and ATP through an activated gamma-phospho-Glu-tRNA(Gln). The polypeptide is Glutamyl-tRNA(Gln) amidotransferase subunit A (Picosynechococcus sp. (strain ATCC 27264 / PCC 7002 / PR-6) (Agmenellum quadruplicatum)).